Consider the following 111-residue polypeptide: Putative carnobacteriocin-B2 immunity protein (111 aa).

Its function is as follows. Could impart immunity to carnobacteriocin-B2 to naturally sensitive host strains. The sequence is that of Putative carnobacteriocin-B2 immunity protein from Carnobacterium maltaromaticum (Carnobacterium piscicola).